Consider the following 187-residue polypeptide: UPF0301 protein plu1183 (187 aa).

This sequence belongs to the UPF0301 (AlgH) family.

The protein is UPF0301 protein plu1183 of Photorhabdus laumondii subsp. laumondii (strain DSM 15139 / CIP 105565 / TT01) (Photorhabdus luminescens subsp. laumondii).